A 400-amino-acid chain; its full sequence is Telomere repeat-binding protein 6 (400 aa).

The region spanning 173 to 252 is the Ubiquitin-like domain; it reads VKFGIKSLNI…DDENLGSLGF (80 aa). In terms of domain architecture, HTH myb-type spans 310–369; that stretch reads VQRRIRRPFTVSEVEALVQAVERLGTGRWRDVKSHAFNHVNHRTYVDLKDKWKTLVHTAK. The H-T-H motif DNA-binding region spans 338 to 365; the sequence is WRDVKSHAFNHVNHRTYVDLKDKWKTLV.

As to quaternary structure, homodimer. In terms of tissue distribution, expressed ubiquitously.

The protein localises to the nucleus. In terms of biological role, binds specifically to the plant telomeric double-stranded DNA sequences. At least 4 repeats of telomeric sequences are required for binding. The sequence is that of Telomere repeat-binding protein 6 (TRP6) from Arabidopsis thaliana (Mouse-ear cress).